The following is a 467-amino-acid chain: Zinc finger protein ZIC 3 (467 aa).

Residues 66-107 (LSSGQSSAFTPQGSGYANALGHHHHHHHHHHHTSQVPSYGGA) form a disordered region. A compositionally biased stretch (polar residues) spans 67–80 (SSGQSSAFTPQGSG). Residues 86-98 (GHHHHHHHHHHHT) are compositionally biased toward basic residues. Residue K248 forms a Glycyl lysine isopeptide (Lys-Gly) (interchain with G-Cter in SUMO2) linkage. The segment at 251-286 (LSCKWIDEAQLSRPKKSCDRTFSTMHELVTHVTMEH) adopts a C2H2-type 1; atypical zinc-finger fold. Residues 295-322 (HVCYWEECPREGKSFKAKYKLVNHIRVH) form a C2H2-type 2; atypical zinc finger. 2 short sequence motifs (nuclear localization signal) span residues 297-322 (CYWEECPREGKSFKAKYKLVNHIRVH) and 330-352 (CPFPGCGKIFARSENLKIHKRTH). 3 C2H2-type zinc fingers span residues 328 to 352 (FPCPFPGCGKIFARSENLKIHKRTH), 358 to 382 (FKCEFEGCDRRFANSSDRKKHMHVH), and 388 to 410 (YICKVCDKSYTHPSSLRKHMKVH). The interval 404–467 (RKHMKVHESQ…LPPNFNEWYV (64 aa)) is disordered. The segment covering 412-428 (SQGSDSSPAASSGYESS) has biased composition (low complexity). Polar residues predominate over residues 435–455 (SANSKDTTKTPSAVQTSTSHN).

The protein belongs to the GLI C2H2-type zinc-finger protein family. In terms of assembly, interacts (via the C2H2-type domains 3, 4 and 5) with MDFIC (via the C2H2-type domains 3, 4 and 5); the interaction reduces its transcriptional activity. Interacts with KPNA1 and KPNA6. Interacts (via C2H2-type domains 3, 4 and 5) with GLI3; the interaction enhances its transcriptional activity.

The protein resides in the nucleus. The protein localises to the cytoplasm. Functionally, acts as a transcriptional activator. Required in the earliest stages in both axial midline development and left-right (LR) asymmetry specification. Binds to the minimal GLI-consensus sequence 5'-GGGTGGTC-3'. In Homo sapiens (Human), this protein is Zinc finger protein ZIC 3 (ZIC3).